The sequence spans 261 residues: MSGEQTPMCSMDLPEVKVKTSMAGRCRVFWYEQYVQPCIVELVGSALFIFIGCLSVIENSPNTGLLQPALAHGLALGLIIATLGNISGGHFNPAVSLAVTVIGGLKTMLLIPYWISQLFGGLIGAALAKVVSPEERFWNASGAAFAIVQEQEQVAEALGIEIILTMLLVLAVCMGAVNEKTMGPLAPFSIGFSVIVDILAGGSISGACMNPARAFGPAVMAGYWDFHWIYWLGPLLAGLFVGLLIRLLIGDEKTRLILKSR.

Residues 1 to 36 (MSGEQTPMCSMDLPEVKVKTSMAGRCRVFWYEQYVQ) are Cytoplasmic-facing. A helical transmembrane segment spans residues 37-57 (PCIVELVGSALFIFIGCLSVI). Cysteine persulfide is present on cysteine 53. A Cysteine sulfenic acid (-SOH) modification is found at cysteine 53. Topologically, residues 58–84 (ENSPNTGLLQPALAHGLALGLIIATLG) are extracellular. A helical membrane pass occupies residues 85–105 (NISGGHFNPAVSLAVTVIGGL). The short motif at 92–94 (NPA) is the NPA 1 element. Residues 106 to 107 (KT) lie on the Cytoplasmic side of the membrane. Residues 108–128 (MLLIPYWISQLFGGLIGAALA) traverse the membrane as a helical segment. Residues 129–156 (KVVSPEERFWNASGAAFAIVQEQEQVAE) lie on the Extracellular side of the membrane. An N-linked (GlcNAc...) asparagine glycan is attached at asparagine 139. A helical transmembrane segment spans residues 157–177 (ALGIEIILTMLLVLAVCMGAV). Topologically, residues 178–183 (NEKTMG) are cytoplasmic. Residues 184-204 (PLAPFSIGFSVIVDILAGGSI) form a helical membrane-spanning segment. The Extracellular segment spans residues 205–228 (SGACMNPARAFGPAVMAGYWDFHW). Positions 210-212 (NPA) match the NPA 2 motif. Residues 229–249 (IYWLGPLLAGLFVGLLIRLLI) form a helical membrane-spanning segment. Topologically, residues 250 to 261 (GDEKTRLILKSR) are cytoplasmic.

Belongs to the MIP/aquaporin (TC 1.A.8) family. Sulfenylation at Cys-53(C53-SOH) when hydrogen peroxide flows through the AQP8 channel, making it susceptible to hydrogen sulfide produced by CBS. Post-translationally, persulfidation at Cys-53 is required to gate AQP8 channel; under stress condition, hydrogen peroxide accumulates in the cell leading to CBS activation that produces hydrogen sulfide inducing persulfidation of oxidized Cys-53 (C53-SOH). In terms of processing, N-glycosylated. Expressed in placenta. Highly expressed in the epithelial layer of gall-bladders. Expressed in heart, kidney, submandibular gland, liver, small intestine, colon, testes, and epididymis. In testes, expressed in spermatogenic cells.

The protein localises to the cell membrane. The protein resides in the mitochondrion inner membrane. It is found in the apical cell membrane. It localises to the basolateral cell membrane. Its subcellular location is the smooth endoplasmic reticulum membrane. It carries out the reaction H2O(in) = H2O(out). It catalyses the reaction urea(in) = urea(out). The enzyme catalyses NH4(+)(in) = NH4(+)(out). The catalysed reaction is H2O2(out) = H2O2(in). It carries out the reaction formamide(out) = formamide(in). It catalyses the reaction methylamine(out) = methylamine(in). Reversibly gated by a two-step sulfenylation-persulfidation process in cells undergoing diverse stresses. Functionally, channel that allows the facilitated permeation of water and uncharged molecules, such as hydrogen peroxide and the neutral form of ammonia (NH3), through cellular membranes such as plasma membrane, inner mitochondrial membrane and endoplasmic reticulum membrane of several tissues. The transport of ammonia neutral form induces a parallel transport of proton, at alkaline pH when the concentration of ammonia is high. However, it is unclear whether the transport of proton takes place via the aquaporin or via an endogenous pathway. Also, may transport ammonia analogs such as formamide and methylamine, a transport favourited at basic pH due to the increase of unprotonated (neutral) form, which is expected to favor diffusion. In vitro, may be also permeable to urea but not to glycerol. Does not transport urea or glycerol. The water transport mechanism is mercury- and copper-sensitive and passive in response to osmotic driving forces. At the canicular plasma membrane, mediates the osmotic transport of water toward the bile canaliculus and facilitates the cAMP-induced bile canalicular water secretion, a process involved in bile formation. In addition, mediates the hydrogen peroxide release from hepatocyte mitochondria that modulates the SREBF2-mediated cholesterol synthesis and facilitates the mitochondrial ammonia uptake which is metabolized into urea, mainly under glucagon stimulation. In B cells, transports the CYBB-generated hydrogen peroxide from the external leaflet of the plasma membrane to the cytosol to promote B cell activation and differentiation for signal amplification. In the small intestine and colon system, mediates water transport through mitochondria and apical membrane of epithelial cells. May play an important role in the adaptive response of proximal tubule cells to acidosis possibly facilitating mitochondrial ammonia transport. This is Aquaporin-8 from Mus musculus (Mouse).